The primary structure comprises 428 residues: 3-phosphoshikimate 1-carboxyvinyltransferase (428 aa).

3-phosphoshikimate contacts are provided by K22, S23, and R27. Residue K22 participates in phosphoenolpyruvate binding. G98 and R126 together coordinate phosphoenolpyruvate. The 3-phosphoshikimate site is built by S172, S173, Q174, S200, D316, N339, and K343. Residue Q174 coordinates phosphoenolpyruvate. The Proton acceptor role is filled by D316. Phosphoenolpyruvate is bound by residues R347, R389, and K414.

The protein belongs to the EPSP synthase family. In terms of assembly, monomer.

It is found in the cytoplasm. The enzyme catalyses 3-phosphoshikimate + phosphoenolpyruvate = 5-O-(1-carboxyvinyl)-3-phosphoshikimate + phosphate. The protein operates within metabolic intermediate biosynthesis; chorismate biosynthesis; chorismate from D-erythrose 4-phosphate and phosphoenolpyruvate: step 6/7. In terms of biological role, catalyzes the transfer of the enolpyruvyl moiety of phosphoenolpyruvate (PEP) to the 5-hydroxyl of shikimate-3-phosphate (S3P) to produce enolpyruvyl shikimate-3-phosphate and inorganic phosphate. The chain is 3-phosphoshikimate 1-carboxyvinyltransferase from Psychromonas ingrahamii (strain DSM 17664 / CCUG 51855 / 37).